A 627-amino-acid polypeptide reads, in one-letter code: UvrABC system protein C (627 aa).

A GIY-YIG domain is found at 26-105; it reads PEPGVYFMRD…IKQHQPYFNV (80 aa). The UVR domain maps to 215–250; it reads QELIDILSEQMEKAAEALNFEVAARIRDQIAGLKSL.

Belongs to the UvrC family. Interacts with UvrB in an incision complex.

It localises to the cytoplasm. The UvrABC repair system catalyzes the recognition and processing of DNA lesions. UvrC both incises the 5' and 3' sides of the lesion. The N-terminal half is responsible for the 3' incision and the C-terminal half is responsible for the 5' incision. The polypeptide is UvrABC system protein C (Nostoc sp. (strain PCC 7120 / SAG 25.82 / UTEX 2576)).